The sequence spans 166 residues: UBA-like domain-containing protein 2 (166 aa).

Residues 120 to 166 are disordered; the sequence is QQPVWLPPASPTTHLHHHHHHPQPVWPPNSQPTGGPQKAMAAMDGQR.

It belongs to the UBALD family.

The protein is UBA-like domain-containing protein 2 (ubald2) of Xenopus tropicalis (Western clawed frog).